The following is a 412-amino-acid chain: Double C2-like domain-containing protein beta (412 aa).

Positions 1 to 36 (MTLRRRGEKATISIQEHMAIDVCPGPIRPIKQISDY) are negatively regulates targeting to plasma membrane. The interval 1 to 90 (MTLRRRGEKA…EDVDQLFGAY (90 aa)) is mediates interaction with DYNLT1. The interval 38-123 (PRFPRGLPPT…PDADGYESDD (86 aa)) is disordered. A compositionally biased stretch (low complexity) spans 49 to 73 (APRASAPPDAPARSPAATAGPRSPS). Residues 95 to 108 (GPSPGPSPVRPPAK) show a composition bias toward pro residues. Positions 112-123 (DEPDADGYESDD) are enriched in acidic residues. C2 domains lie at 126–250 (ALGT…SICL) and 266–399 (ERGR…ERWH). Residues Asp157, Asp163, Asp218, Asp220, Asp297, Asp303, Asp357, Asp359, and Asp365 each contribute to the Ca(2+) site. The interval 257–375 (DKAEDKSLEE…FIGGVVLGIN (119 aa)) is mediates interaction with STXBP3. Ser411 bears the Phosphoserine mark.

As to quaternary structure, interacts with STX4; the interaction is calcium-dependent, increased by insulin and glucose, and mediates vesicle fusion with plasma membrane in pancreatic cells and adipocytes. Interacts with STXBP3; the interaction is direct, occurs at the cell membrane and regulates glucose-stimulated insulin secretion. Interacts with cytoplasmic dynein light chain DYNLT1. Interacts with the SNARE (soluble N-ethylmaleimide-sensitive factor attached protein receptor) complex composed of SNAP25, STX1A and VAMP2; the interaction is calcium-dependent and competitive with SYT1. May interact with UNC13A; the interaction mediates targeting to the plasma membrane. It depends on Ca(2+) as a cofactor. Expressed in brain; highly enriched in neurons.

The protein localises to the cytoplasm. The protein resides in the cytoplasmic granule. It localises to the cell membrane. Its function is as follows. Calcium sensor which positively regulates SNARE-dependent fusion of vesicles with membranes. Binds phospholipids in a calcium-dependent manner and may act at the priming stage of fusion by modifying membrane curvature to stimulate fusion. Involved in calcium-triggered exocytosis in chromaffin cells and calcium-dependent spontaneous release of neurotransmitter in absence of action potentials in neuronal cells. Involved both in glucose-stimulated insulin secretion in pancreatic cells and insulin-dependent GLUT4 transport to the plasma membrane in adipocytes. This Rattus norvegicus (Rat) protein is Double C2-like domain-containing protein beta (Doc2b).